We begin with the raw amino-acid sequence, 103 residues long: Pro-glucagon (103 aa).

It belongs to the glucagon family.

It is found in the secreted. Its function is as follows. Plays a key role in glucose metabolism and homeostasis. Regulates blood glucose by increasing gluconeogenesis and decreasing glycolysis. The protein is Pro-glucagon (gcg) of Aquarana catesbeiana (American bullfrog).